An 842-amino-acid polypeptide reads, in one-letter code: Axin-1 (842 aa).

A disordered region spans residues 1-75 (MSVKGKGFPL…LDLGYEPEGS (75 aa)). Residues 34–46 (TTDQRPFSHTYYS) are compositionally biased toward polar residues. Residues 88-211 (SLHSLLDDQD…LKSDIYLEYT (124 aa)) enclose the RGS domain. 9 disordered regions span residues 218 to 242 (PKNYSDQSSGSGTGKGPSGYLPTLN), 277 to 297 (SHCAGSNRRLSDGREFRPGTW), 316 to 344 (TSANDSEQQSMSSDADTMSLTDSSVDGIP), 414 to 451 (KRVRAEEEGDDGDVSSGPSVISHKLPSGPPMHHFNSRY), 482 to 532 (KTPG…AKVD), 543 to 562 (YHHVHHHGGVKPKEQIDGES), 615 to 637 (KKADLGKSESASHEMPVVPEDSE), 656 to 675 (HKKSNHSSSSAKKQPPTELA), and 729 to 754 (RLEEEEKKAAKMPQKQRLKPQKKNVS). Over residues 316–339 (TSANDSEQQSMSSDADTMSLTDSS) the composition is skewed to polar residues. Residues 348-433 (LRKHYRREMQ…DGDVSSGPSV (86 aa)) are interaction with GSK3B. Residues 434–508 (ISHKLPSGPP…RSPDGHLSKT (75 aa)) are interaction with beta-catenin. Residues 543-552 (YHHVHHHGGV) show a composition bias toward basic residues. A compositionally biased stretch (basic and acidic residues) spans 615–626 (KKADLGKSESAS). The DIX domain occupies 760–842 (CDNIVVAYYF…KIIGQVEKID (83 aa)).

As to quaternary structure, homodimer. Interacts with hwa; leading to promote the tankyrase-mediated degradation of axin1. ADP-ribosylated by tankyrase tnks and tnks2. Poly-ADP-ribosylated protein is recognized by rnf146, followed by ubiquitination at 'Lys-48' and subsequent activation of the Wnt signaling pathway. Post-translationally, ubiquitinated by rnf146 when poly-ADP-ribosylated, leading to its degradation and subsequent activation of the Wnt signaling pathway.

The protein localises to the cytoplasm. Its subcellular location is the nucleus. The protein resides in the membrane. It is found in the cell membrane. Component of the beta-catenin destruction complex required for regulating ctnnb1 levels through phosphorylation and ubiquitination, and modulating Wnt-signaling. Controls dorsoventral patterning via two opposing effects; down-regulates ctnnb1 to inhibit the Wnt signaling pathway and ventralize embryos, but also dorsalizes embryos by activating a Wnt-independent JNK signaling pathway. The sequence is that of Axin-1 (axin1) from Xenopus laevis (African clawed frog).